Reading from the N-terminus, the 180-residue chain is Inner membrane-spanning protein YciB (180 aa).

6 helical membrane passes run 4–24, 25–45, 52–72, 76–96, 118–138, and 150–170; these read LLSE…GGGI, QHAT…CYVI, LSII…ISGN, IKIK…MSGI, ITLS…NEVV, and FKVF…LPLL.

It belongs to the YciB family.

Its subcellular location is the cell inner membrane. In terms of biological role, plays a role in cell envelope biogenesis, maintenance of cell envelope integrity and membrane homeostasis. In Rickettsia massiliae (strain Mtu5), this protein is Inner membrane-spanning protein YciB.